A 125-amino-acid chain; its full sequence is uncharacterized protein (125 aa).

A coiled-coil region spans residues 5-33 (NLTVEQLAAELTKLQMENSHLKRKLRRSV). Disordered regions lie at residues 22 to 50 (NSHLKRKLRRSVGGPPKEPPKPRELTEPE) and 96 to 125 (FRLHFRPDPSENPEKKLSKEKRRTARGQQQ). Basic and acidic residues-rich tracts occupy residues 39-50 (EPPKPRELTEPE) and 96-112 (FRLHFRPDPSENPEKKL). The span at 113–125 (SKEKRRTARGQQQ) shows a compositional bias: basic residues.

It belongs to the herpesviridae BLRF2 family.

This is an uncharacterized protein from Connochaetes taurinus (Blue wildebeest).